The chain runs to 374 residues: CC-adding tRNA nucleotidyltransferase (374 aa).

39-42 contacts CTP; it reads GAVR. The Mg(2+) site is built by aspartate 52 and aspartate 54. CTP-binding positions include 126–127, asparagine 131, 171–180, and arginine 209; these read RD and DASRLVRAAR.

Belongs to the tRNA nucleotidyltransferase/poly(A) polymerase family. The cofactor is Mg(2+).

The enzyme catalyses a tRNA precursor + 2 CTP = a tRNA with a 3' CC end + 2 diphosphate. TRNA nucleotidyltransferase involved in the synthesis of the tRNA CCA terminus. Adds the two cytidine residues to tRNA. The chain is CC-adding tRNA nucleotidyltransferase from Deinococcus radiodurans (strain ATCC 13939 / DSM 20539 / JCM 16871 / CCUG 27074 / LMG 4051 / NBRC 15346 / NCIMB 9279 / VKM B-1422 / R1).